The primary structure comprises 167 residues: Piercer of microtubule wall 1 protein (167 aa).

Residues 1–54 (MSEEKPQQSAEEPEPGEPKAKPAPEEPEPGEPKAKPAPEEPEPGEPKAKPAPEK) are disordered. Over residues 16-54 (GEPKAKPAPEEPEPGEPKAKPAPEEPEPGEPKAKPAPEK) the composition is skewed to basic and acidic residues.

This sequence belongs to the PIERCE1 family. As to quaternary structure, microtubule inner protein component of sperm flagellar doublet microtubules. Interacts with CFAP53, ODAD1 and ODAD3; the interactions link the outer dynein arms docking complex (ODA-DC) to the internal microtubule inner proteins (MIP) in cilium axoneme. As to expression, expressed in brain, lung, kidney and testis.

The protein resides in the cytoplasm. The protein localises to the cytoskeleton. It localises to the cilium axoneme. It is found in the flagellum axoneme. In terms of biological role, microtubule inner protein involved in the attachment of outer dynein arms (ODAs) to dynein-decorated doublet microtubules (DMTs) in cilia axoneme. Functions at the initial step of left-right asymmetry specification of the visceral organs. In Mus musculus (Mouse), this protein is Piercer of microtubule wall 1 protein.